The sequence spans 202 residues: Guanylate kinase (202 aa).

One can recognise a Guanylate kinase-like domain in the interval 18 to 200 (LKPVVVFGPS…AYKQLEAICL (183 aa)). 25–32 (GPSGVGKS) lines the ATP pocket.

Belongs to the guanylate kinase family.

It carries out the reaction GMP + ATP = GDP + ADP. Functionally, essential for recycling GMP and indirectly, cGMP. This is Guanylate kinase from Schizosaccharomyces pombe (strain 972 / ATCC 24843) (Fission yeast).